A 470-amino-acid chain; its full sequence is Nuclear receptor subfamily 0 group B member 1 (470 aa).

3 tandem repeats follow at residues 1–67 (MAGE…YRCC), 68–133 (FCGK…YRCC), and 134–200 (FCGE…YRCC). A 4 X 67 AA tandem repeats region spans residues 1 to 253 (MAGENHQWQG…RPVALKSPQV (253 aa)). 3 short sequence motifs (LXXLL motif) span residues 13 to 17 (LYNML), 80 to 84 (LYSML), and 146 to 150 (LYSLL). A 4; truncated repeat occupies 201-253 (FCGEDHPQQGSTLYCMPTSTNQAQAAPEERPRAPWWDTSSGALRPVALKSPQV). An NR LBD domain is found at 205–469 (DHPQQGSTLY…DMMLEMLCTK (265 aa)). The AF-2 motif signature appears at 461-466 (MMLEML).

The protein belongs to the nuclear hormone receptor family. NR0 subfamily. Homodimer. Interacts with NR5A1, NR5A2, NR0B2 and with COPS2. Interacts with ESRRB; represses ESRRB activity at the GATA6 promoter.

It is found in the nucleus. Its subcellular location is the cytoplasm. In terms of biological role, nuclear receptor that lacks a DNA-binding domain and acts as a corepressor that inhibits the transcriptional activity of other nuclear receptors through heterodimeric interactions. Component of a cascade required for the development of the hypothalamic-pituitary-adrenal-gonadal axis. May also have a role in the development of the embryo and in the maintenance of embryonic stem cell pluripotency. In Pan troglodytes (Chimpanzee), this protein is Nuclear receptor subfamily 0 group B member 1 (NR0B1).